Consider the following 1010-residue polypeptide: Retinoblastoma-related protein 3 (1010 aa).

The tract at residues 416–616 (TPVSTAMTTA…EKGSSMYNSL (201 aa)) is domain A. The pocket stretch occupies residues 416–858 (TPVSTAMTTA…NEVFIPAVKS (443 aa)). Residues 617-727 (IVARPALSVE…PAAGGETCAE (111 aa)) form a spacer region. A domain B region spans residues 728-858 (TGIGVFFSKI…NEVFIPAVKS (131 aa)). Disordered stretches follow at residues 867 to 889 (ASASPKKKEEEKGPADVGPFPES) and 986 to 1010 (GSDRDAKPAADPAKTTPVKCEPSDS).

It belongs to the retinoblastoma protein (RB) family.

The protein localises to the nucleus. Regulator of biological processes that recruits a histone deacetylase to control gene transcription. May play a role in the entry into mitosis, negatively regulating the cell proliferation. Formation of stable complexes with geminiviridae replication-associated proteins may create a cellular environment which favors viral DNA replication. This chain is Retinoblastoma-related protein 3 (RBR3), found in Zea mays (Maize).